The sequence spans 433 residues: Sulfhydrylase FUB7 (433 aa).

Lysine 211 carries the N6-(pyridoxal phosphate)lysine modification.

This sequence belongs to the trans-sulfuration enzymes family. Pyridoxal 5'-phosphate is required as a cofactor.

It functions in the pathway mycotoxin biosynthesis. Its function is as follows. Sulfhydrylase; part of the gene cluster that mediates the biosynthesis of fusaric acid, a mycotoxin with low to moderate toxicity to animals and humans, but with high phytotoxic properties. L-aspartate is suggested as fusaric acid amino acid precursor that is activated and further processed to O-acetyl-L-homoserine by cluster enzymes aspartate kinase FUB3 and homoserine O-acetyltransferase FUB5, as well as enzymes of the primary metabolism. The polyketide synthase (PKS) FUB1 generates the triketide trans-2-hexenal which is presumptively released by the hydrolase FUB4 and linked to the NRPS-bound amino acid precursor by NAD(P)-dependent dehydrogenase FUB6. FUB1, FUB4, and the non-canonical NRPS Fub8 may form an enzyme complex. Further processing of the NRPS-bound intermediate might be carried out by FUB6 and the O-acetylhomoserine FUB7, enabling a spontaneous electrocyclization to close the carbon backbone of fusaric acid. Dihydrofusaric acid is likely to be released via reduction by the thioester reductase (TR) domain of FUB8 whereupon the final oxidation to fusaric acid may (also) be performed by the FMN-dependent dehydrogenase FUB9. In Gibberella moniliformis (strain M3125 / FGSC 7600) (Maize ear and stalk rot fungus), this protein is Sulfhydrylase FUB7.